Consider the following 601-residue polypeptide: Secretogranin-2 (601 aa).

A signal peptide spans 1 to 30 (MSSQRNYCLAGCLSSCILVILMSFSDAASF). The interval 89–109 (EQKDTQALSTDTAKSPTSDDE) is disordered. Positions 93–104 (TQALSTDTAKSP) are enriched in polar residues. The residue at position 151 (Y151) is a Sulfotyrosine. Residues 258–273 (VESQTQEELKESKEEV) show a composition bias toward basic and acidic residues. Residues 258–307 (VESQTQEELKESKEEVEKTDDMEDEIKRSGLLGLQDEEPEKDTKEQESEN) form a disordered region.

Belongs to the chromogranin/secretogranin protein family.

It is found in the secreted. Neuroendocrine protein of the granin family that regulates the biogenesis of secretory granules. This is Secretogranin-2 from Pelophylax ridibundus (Marsh frog).